A 1192-amino-acid polypeptide reads, in one-letter code: DNA topoisomerase 2 (1192 aa).

ATP-binding positions include Asn-64, Asn-95, and 142-149 (GTNGVGLK). Residues Glu-438, Asp-539, and Asp-541 each contribute to the Mg(2+) site. In terms of domain architecture, Topo IIA-type catalytic spans 707–1174 (IPNFLDGMTR…PGASVWLEEI (468 aa)). The active-site O-(5'-phospho-DNA)-tyrosine intermediate is Tyr-800.

This sequence belongs to the type II topoisomerase family. Mg(2+) is required as a cofactor. Requires Mn(2+) as cofactor. The cofactor is Ca(2+).

It localises to the host cytoplasm. It catalyses the reaction ATP-dependent breakage, passage and rejoining of double-stranded DNA.. In terms of biological role, type II topoisomerase. Processively relaxes supercoiled DNA. Displays DNA-supercoiling activity only when associated with the viral histone-like protein. In African swine fever virus (strain Badajoz 1971 Vero-adapted) (Ba71V), this protein is DNA topoisomerase 2 (TOP).